Consider the following 277-residue polypeptide: Sulfur carrier protein FdhD (277 aa).

Cysteine 121 (cysteine persulfide intermediate) is an active-site residue. Residue 260 to 265 (FCKPGR) coordinates Mo-bis(molybdopterin guanine dinucleotide).

The protein belongs to the FdhD family.

The protein localises to the cytoplasm. Required for formate dehydrogenase (FDH) activity. Acts as a sulfur carrier protein that transfers sulfur from IscS to the molybdenum cofactor prior to its insertion into FDH. This is Sulfur carrier protein FdhD from Escherichia coli O6:K15:H31 (strain 536 / UPEC).